Consider the following 147-residue polypeptide: Ribosome maturation factor RimP (147 aa).

Belongs to the RimP family.

The protein resides in the cytoplasm. Required for maturation of 30S ribosomal subunits. The chain is Ribosome maturation factor RimP from Thermosipho melanesiensis (strain DSM 12029 / CIP 104789 / BI429).